A 331-amino-acid polypeptide reads, in one-letter code: LIM/homeobox protein Lhx9 (331 aa).

2 consecutive LIM zinc-binding domains span residues 71-132 (TLCA…FSVK) and 133-194 (RCAR…LVQG). The disordered stretch occupies residues 253-275 (ETDLDRDQTYPPSQKTKRMRTSF). Residues 268–327 (TKRMRTSFKHHQLRTMKSYFAINHNPDAKDLKQLAQKTGLTKRVLQGEQCSGFNSHTTRR) constitute a DNA-binding region (homeobox).

Its subcellular location is the nucleus. May be involved in gonadal development. In Xenopus laevis (African clawed frog), this protein is LIM/homeobox protein Lhx9 (lhx9).